Here is a 175-residue protein sequence, read N- to C-terminus: Large ribosomal subunit protein uL16 (175 aa).

It belongs to the universal ribosomal protein uL16 family.

This Caldivirga maquilingensis (strain ATCC 700844 / DSM 13496 / JCM 10307 / IC-167) protein is Large ribosomal subunit protein uL16.